Consider the following 225-residue polypeptide: Cytochrome c oxidase subunit 2 (225 aa).

At M1–N25 the chain is on the mitochondrial intermembrane side. A helical membrane pass occupies residues L26 to M47. Residues N48–E62 are Mitochondrial matrix-facing. Residues I63–K82 traverse the membrane as a helical segment. At I83–N225 the chain is on the mitochondrial intermembrane side. Cu cation contacts are provided by H159, C194, E196, C198, H202, and M205. Residue E196 coordinates Mg(2+).

This sequence belongs to the cytochrome c oxidase subunit 2 family. Component of the cytochrome c oxidase (complex IV, CIV), a multisubunit enzyme composed of a catalytic core of 3 subunits and several supernumerary subunits. The complex exists as a monomer or a dimer and forms supercomplexes (SCs) in the inner mitochondrial membrane with ubiquinol-cytochrome c oxidoreductase (cytochrome b-c1 complex, complex III, CIII). Requires Cu cation as cofactor.

Its subcellular location is the mitochondrion inner membrane. The enzyme catalyses 4 Fe(II)-[cytochrome c] + O2 + 8 H(+)(in) = 4 Fe(III)-[cytochrome c] + 2 H2O + 4 H(+)(out). Functionally, component of the cytochrome c oxidase, the last enzyme in the mitochondrial electron transport chain which drives oxidative phosphorylation. The respiratory chain contains 3 multisubunit complexes succinate dehydrogenase (complex II, CII), ubiquinol-cytochrome c oxidoreductase (cytochrome b-c1 complex, complex III, CIII) and cytochrome c oxidase (complex IV, CIV), that cooperate to transfer electrons derived from NADH and succinate to molecular oxygen, creating an electrochemical gradient over the inner membrane that drives transmembrane transport and the ATP synthase. Cytochrome c oxidase is the component of the respiratory chain that catalyzes the reduction of oxygen to water. Electrons originating from reduced cytochrome c in the intermembrane space (IMS) are transferred via the dinuclear copper A center (CU(A)) of subunit 2 and heme A of subunit 1 to the active site in subunit 1, a binuclear center (BNC) formed by heme A3 and copper B (CU(B)). The BNC reduces molecular oxygen to 2 water molecules using 4 electrons from cytochrome c in the IMS and 4 protons from the mitochondrial matrix. The chain is Cytochrome c oxidase subunit 2 (COII) from Apis koschevnikovi (Koschevnikov's honey bee).